Here is a 174-residue protein sequence, read N- to C-terminus: MNIVLVGLMGSGKTAVGRLLAERLGRPFVDTDRLVEADAGRTVADIFAAEGEEGFRRREAEVVARAAAGDNQVIATGGGAVLRTENREALRRTGFVIWLDAEPETLYDRARGQGLHRRPLLSGPDPLGRLRALAAARRPFYAQAAHVRICTDRRSLQDVVAEIMEKLQERGERG.

Residue 10–15 (GSGKTA) coordinates ATP. A Mg(2+)-binding site is contributed by Thr14. Substrate is bound by residues Asp32, Arg56, and Gly78. Position 118 (Arg118) interacts with ATP. Arg137 serves as a coordination point for substrate. Arg154 serves as a coordination point for ATP.

The protein belongs to the shikimate kinase family. Monomer. Mg(2+) is required as a cofactor.

Its subcellular location is the cytoplasm. The catalysed reaction is shikimate + ATP = 3-phosphoshikimate + ADP + H(+). Its pathway is metabolic intermediate biosynthesis; chorismate biosynthesis; chorismate from D-erythrose 4-phosphate and phosphoenolpyruvate: step 5/7. In terms of biological role, catalyzes the specific phosphorylation of the 3-hydroxyl group of shikimic acid using ATP as a cosubstrate. The sequence is that of Shikimate kinase from Symbiobacterium thermophilum (strain DSM 24528 / JCM 14929 / IAM 14863 / T).